The primary structure comprises 609 residues: Isocitrate dehydrogenase kinase/phosphatase (609 aa).

Residues 325–331 (APGIKGM) and lysine 346 each bind ATP. Residue aspartate 381 is part of the active site.

The protein belongs to the AceK family.

The protein resides in the cytoplasm. It catalyses the reaction L-seryl-[isocitrate dehydrogenase] + ATP = O-phospho-L-seryl-[isocitrate dehydrogenase] + ADP + H(+). In terms of biological role, bifunctional enzyme which can phosphorylate or dephosphorylate isocitrate dehydrogenase (IDH) on a specific serine residue. This is a regulatory mechanism which enables bacteria to bypass the Krebs cycle via the glyoxylate shunt in response to the source of carbon. When bacteria are grown on glucose, IDH is fully active and unphosphorylated, but when grown on acetate or ethanol, the activity of IDH declines drastically concomitant with its phosphorylation. This Acidovorax sp. (strain JS42) protein is Isocitrate dehydrogenase kinase/phosphatase.